Here is a 219-residue protein sequence, read N- to C-terminus: uncharacterized protein (219 aa).

This is an uncharacterized protein from Treponema pallidum (strain Nichols).